Here is a 743-residue protein sequence, read N- to C-terminus: Fork head transcription factor 1 (743 aa).

Residues 39–94 (VTMGRKASNSSDCDVHLGDTKAISRQHAKIFYSFPNQRFEISVMGKNGAFVDGEFV) enclose the FHA domain. Disordered regions lie at residues 214-291 (QPPK…ATQK), 411-450 (GISA…LQNG), and 529-743 (QMQG…SSYT). Residues 221–230 (VSPSSIQRLS) are compositionally biased toward polar residues. The segment at residues 291 to 385 (KPNLSYANLI…EGNFFRRTKK (95 aa)) is a DNA-binding region (fork-head). The segment covering 434–443 (SRGENVEDRP) has biased composition (basic and acidic residues). Low complexity predominate over residues 529–539 (QMQGPQQVQQQ). Residues 562-576 (NITSPSPSISVTQRP) show a composition bias toward polar residues. Residues 614 to 624 (SAGPSSVRSSS) show a composition bias toward low complexity. Polar residues-rich tracts occupy residues 625-643 (YNST…QNLH), 670-686 (TGNQ…ASSF), and 695-726 (ENGS…NSSD).

The protein localises to the nucleus. Its function is as follows. Acts as a transcriptional activator for ribosomal protein genes (RPG) that contain a HomolE UAS (upstream activating sequence) in addition to a HomolD promoter element; HomolD plays the role of a TATA box in RPG promoters that do not contain a canonical TATA sequence. Binds to HomolE elements with consensus sequence 3'-ACCCTACCCT-5' (or its inverted form AGGGTAGGGT). This Schizosaccharomyces pombe (strain 972 / ATCC 24843) (Fission yeast) protein is Fork head transcription factor 1.